Consider the following 260-residue polypeptide: MSSQVAKAATQGELLEALYGEVTVQELQETNLGVLTPHRGDQRVVFTPLLPPRTQTRISGVLRRLRPTRNTGGLLYLEKVVVVFTPHVPDDAPGEVEVWIHDSLLPNLNSVGPRLRFPLNGGPRLMAFYPPYSIPLMDKSKEMPRCFAIVSELLSASYVGGGSPFSLHIMWQPQVESLAHNYLMRPPRMQKICRGMVKDALGSLSSRKSYIAGAVSHRFALTAANPLPISGDTAEEAGEASSGEPHWVPEATAPRVRKAT.

The segment at 230–260 is disordered; sequence SGDTAEEAGEASSGEPHWVPEATAPRVRKAT.

Transports viral genome to neighboring plant cells directly through plasmosdesmata, without any budding. The movement protein allows efficient cell to cell propagation, by bypassing the host cell wall barrier. Might act by forming tubules structures that increase the size exclusion limit (SEL) of plasmodesmata, thereby allowing viral ribonucleoproteins to spread directly to neighboring cells. Binds to ssRNA. The sequence is that of Movement protein from Groundnut rosette virus (strain MC1) (GRV).